A 75-amino-acid chain; its full sequence is uncharacterized protein (75 aa).

The chain crosses the membrane as a helical span at residues 4 to 26 (PSLLFLGFSGVLAFGEVGWVGVY).

Its subcellular location is the membrane. This is an uncharacterized protein from Treponema pallidum (strain Nichols).